Consider the following 332-residue polypeptide: tRNA U34 carboxymethyltransferase (332 aa).

Carboxy-S-adenosyl-L-methionine-binding positions include Lys91, Trp105, Lys110, Gly130, 152–154, 181–182, Met196, Tyr200, and Arg315; these read DPS and IE.

It belongs to the class I-like SAM-binding methyltransferase superfamily. CmoB family. In terms of assembly, homotetramer.

It carries out the reaction carboxy-S-adenosyl-L-methionine + 5-hydroxyuridine(34) in tRNA = 5-carboxymethoxyuridine(34) in tRNA + S-adenosyl-L-homocysteine + H(+). Its function is as follows. Catalyzes carboxymethyl transfer from carboxy-S-adenosyl-L-methionine (Cx-SAM) to 5-hydroxyuridine (ho5U) to form 5-carboxymethoxyuridine (cmo5U) at position 34 in tRNAs. The protein is tRNA U34 carboxymethyltransferase of Shewanella sp. (strain W3-18-1).